The chain runs to 417 residues: NADH-quinone oxidoreductase subunit D (417 aa).

The protein belongs to the complex I 49 kDa subunit family. As to quaternary structure, NDH-1 is composed of 14 different subunits. Subunits NuoB, C, D, E, F, and G constitute the peripheral sector of the complex.

It is found in the cell inner membrane. It carries out the reaction a quinone + NADH + 5 H(+)(in) = a quinol + NAD(+) + 4 H(+)(out). NDH-1 shuttles electrons from NADH, via FMN and iron-sulfur (Fe-S) centers, to quinones in the respiratory chain. The immediate electron acceptor for the enzyme in this species is believed to be ubiquinone. Couples the redox reaction to proton translocation (for every two electrons transferred, four hydrogen ions are translocated across the cytoplasmic membrane), and thus conserves the redox energy in a proton gradient. The polypeptide is NADH-quinone oxidoreductase subunit D (Legionella pneumophila subsp. pneumophila (strain Philadelphia 1 / ATCC 33152 / DSM 7513)).